We begin with the raw amino-acid sequence, 143 residues long: Transcription antitermination protein NusB (143 aa).

This sequence belongs to the NusB family.

Its function is as follows. Involved in transcription antitermination. Required for transcription of ribosomal RNA (rRNA) genes. Binds specifically to the boxA antiterminator sequence of the ribosomal RNA (rrn) operons. This chain is Transcription antitermination protein NusB, found in Mannheimia succiniciproducens (strain KCTC 0769BP / MBEL55E).